The primary structure comprises 347 residues: Holliday junction branch migration complex subunit RuvB (347 aa).

The tract at residues 4 to 186 is large ATPase domain (RuvB-L); the sequence is INEYGSERIV…FGMIFEMNFY (183 aa). ATP is bound by residues Leu-25, Arg-26, Gly-67, Lys-70, Thr-71, Thr-72, 133 to 135, Arg-176, Tyr-186, and Arg-223; that span reads EDF. Thr-71 is a binding site for Mg(2+). The small ATPAse domain (RuvB-S) stretch occupies residues 187-257; that stretch reads TQEELKMIIT…IVEEVMRLLG (71 aa). The tract at residues 260–347 is head domain (RuvB-H); that stretch reads EFGLDEMDRK…GLFDGFGNIE (88 aa). The DNA site is built by Arg-315 and Arg-320.

Belongs to the RuvB family. In terms of assembly, homohexamer. Forms an RuvA(8)-RuvB(12)-Holliday junction (HJ) complex. HJ DNA is sandwiched between 2 RuvA tetramers; dsDNA enters through RuvA and exits via RuvB. An RuvB hexamer assembles on each DNA strand where it exits the tetramer. Each RuvB hexamer is contacted by two RuvA subunits (via domain III) on 2 adjacent RuvB subunits; this complex drives branch migration. In the full resolvosome a probable DNA-RuvA(4)-RuvB(12)-RuvC(2) complex forms which resolves the HJ.

The protein resides in the cytoplasm. It carries out the reaction ATP + H2O = ADP + phosphate + H(+). Functionally, the RuvA-RuvB-RuvC complex processes Holliday junction (HJ) DNA during genetic recombination and DNA repair, while the RuvA-RuvB complex plays an important role in the rescue of blocked DNA replication forks via replication fork reversal (RFR). RuvA specifically binds to HJ cruciform DNA, conferring on it an open structure. The RuvB hexamer acts as an ATP-dependent pump, pulling dsDNA into and through the RuvAB complex. RuvB forms 2 homohexamers on either side of HJ DNA bound by 1 or 2 RuvA tetramers; 4 subunits per hexamer contact DNA at a time. Coordinated motions by a converter formed by DNA-disengaged RuvB subunits stimulates ATP hydrolysis and nucleotide exchange. Immobilization of the converter enables RuvB to convert the ATP-contained energy into a lever motion, pulling 2 nucleotides of DNA out of the RuvA tetramer per ATP hydrolyzed, thus driving DNA branch migration. The RuvB motors rotate together with the DNA substrate, which together with the progressing nucleotide cycle form the mechanistic basis for DNA recombination by continuous HJ branch migration. Branch migration allows RuvC to scan DNA until it finds its consensus sequence, where it cleaves and resolves cruciform DNA. The sequence is that of Holliday junction branch migration complex subunit RuvB from Fervidobacterium nodosum (strain ATCC 35602 / DSM 5306 / Rt17-B1).